A 245-amino-acid chain; its full sequence is 1-(5-phosphoribosyl)-5-[(5-phosphoribosylamino)methylideneamino] imidazole-4-carboxamide isomerase (245 aa).

Catalysis depends on Asp-11, which acts as the Proton acceptor. Asp-132 serves as the catalytic Proton donor.

The protein belongs to the HisA/HisF family.

The protein localises to the cytoplasm. The enzyme catalyses 1-(5-phospho-beta-D-ribosyl)-5-[(5-phospho-beta-D-ribosylamino)methylideneamino]imidazole-4-carboxamide = 5-[(5-phospho-1-deoxy-D-ribulos-1-ylimino)methylamino]-1-(5-phospho-beta-D-ribosyl)imidazole-4-carboxamide. The protein operates within amino-acid biosynthesis; L-histidine biosynthesis; L-histidine from 5-phospho-alpha-D-ribose 1-diphosphate: step 4/9. The protein is 1-(5-phosphoribosyl)-5-[(5-phosphoribosylamino)methylideneamino] imidazole-4-carboxamide isomerase of Xanthobacter autotrophicus (strain ATCC BAA-1158 / Py2).